The chain runs to 103 residues: Pyrimidine/purine nucleoside phosphorylase (103 aa).

The protein belongs to the nucleoside phosphorylase PpnP family.

It carries out the reaction a purine D-ribonucleoside + phosphate = a purine nucleobase + alpha-D-ribose 1-phosphate. The catalysed reaction is adenosine + phosphate = alpha-D-ribose 1-phosphate + adenine. The enzyme catalyses cytidine + phosphate = cytosine + alpha-D-ribose 1-phosphate. It catalyses the reaction guanosine + phosphate = alpha-D-ribose 1-phosphate + guanine. It carries out the reaction inosine + phosphate = alpha-D-ribose 1-phosphate + hypoxanthine. The catalysed reaction is thymidine + phosphate = 2-deoxy-alpha-D-ribose 1-phosphate + thymine. The enzyme catalyses uridine + phosphate = alpha-D-ribose 1-phosphate + uracil. It catalyses the reaction xanthosine + phosphate = alpha-D-ribose 1-phosphate + xanthine. Its function is as follows. Catalyzes the phosphorolysis of diverse nucleosides, yielding D-ribose 1-phosphate and the respective free bases. Can use uridine, adenosine, guanosine, cytidine, thymidine, inosine and xanthosine as substrates. Also catalyzes the reverse reactions. The sequence is that of Pyrimidine/purine nucleoside phosphorylase from Shewanella sp. (strain W3-18-1).